The chain runs to 230 residues: Probable C4-dicarboxylate response regulator DctR (230 aa).

One can recognise a Response regulatory domain in the interval 8–124; it reads RVLLIEDDPM…RLKAALTQYE (117 aa). D59 is modified (4-aspartylphosphate). The H-T-H motif DNA-binding region spans 183–209; sequence EEIGRDVGLARVTVRRYLNYLESVGQV.

Phosphorylated by DctS.

The protein localises to the cytoplasm. Member of the two-component regulatory system DctS/DctR. Essential for expression of DctP. This Halalkalibacterium halodurans (strain ATCC BAA-125 / DSM 18197 / FERM 7344 / JCM 9153 / C-125) (Bacillus halodurans) protein is Probable C4-dicarboxylate response regulator DctR (dctR).